The primary structure comprises 1218 residues: Chitin synthase 4 (1218 aa).

2 disordered regions span residues 1 to 93 (MAEP…PERN) and 132 to 190 (TVSS…RRQK). Residues 14-34 (TRDKSHSPYRESPSRRLRDVE) are compositionally biased toward basic and acidic residues. N50 carries N-linked (GlcNAc...) asparagine glycosylation. Polar residues-rich tracts occupy residues 71–80 (SNPNPMSQSD) and 133–142 (VSSGSTQQDT). A compositionally biased stretch (basic and acidic residues) spans 175–190 (RKDTRNLTEEEKRRQK). A glycan (N-linked (GlcNAc...) asparagine) is linked at N180. The next 2 helical transmembrane spans lie at 200-220 (IWNIYCAVVTFWAPDCLLQCF) and 235-255 (VGLISIILLIAAFVGFLTFGF). Residues N365, N404, and N426 are each glycosylated (N-linked (GlcNAc...) asparagine). A helical membrane pass occupies residues 487 to 507 (VVLYVSLVFILAIVAAKFFLA). Disordered regions lie at residues 548 to 570 (PKITDPASTVTGSDGRTSKRGSM) and 582 to 606 (YAVDRRSSRPPPTTMTSQSSNAKLL). The span at 553 to 562 (PASTVTGSDG) shows a compositional bias: polar residues. N617, N903, and N1030 each carry an N-linked (GlcNAc...) asparagine glycan. 3 helical membrane-spanning segments follow: residues 1062 to 1082 (IGTLVLPAAISFTFYLIIISI), 1087 to 1107 (VPVIPLVLLALILGLPAILIV), and 1115 to 1135 (YILWMGIYLLSLPIWNFVLPA). The interval 1188-1218 (QANGSVWNQQPPTRPPSGYGSMHGFEPYRDY) is disordered. A compositionally biased stretch (polar residues) spans 1189–1198 (ANGSVWNQQP). An N-linked (GlcNAc...) asparagine glycan is attached at N1190.

Belongs to the chitin synthase family. Class IV subfamily. In terms of processing, maximal activity requires trypsin activation, suggesting a zymogenic nature.

It is found in the cell membrane. It catalyses the reaction [(1-&gt;4)-N-acetyl-beta-D-glucosaminyl](n) + UDP-N-acetyl-alpha-D-glucosamine = [(1-&gt;4)-N-acetyl-beta-D-glucosaminyl](n+1) + UDP + H(+). With respect to regulation, activity is stimulated by Mg(2+), and is more inhibited by polyoxin D than by nikkomycin. Polymerizes chitin, a structural polymer of the cell wall and septum, by transferring the sugar moiety of UDP-GlcNAc to the non-reducing end of the growing chitin polymer. CHS4 synthesizes a large amount of chitin and appears to play a role in the process of cell separation. CHS4 is particularly well suited for functioning at the higher temperatures associated with its poorly characterized saprophic environment and with human infection. The chain is Chitin synthase 4 from Exophiala dermatitidis (strain ATCC 34100 / CBS 525.76 / NIH/UT8656) (Black yeast).